We begin with the raw amino-acid sequence, 892 residues long: Translation initiation factor IF-2 (892 aa).

The disordered stretch occupies residues 65 to 296 (KTRSTLNIPS…KGKRKPSTLQ (232 aa)). The span at 68-82 (STLNIPSTGGKSKSV) shows a compositional bias: polar residues. Over residues 99-217 (EQAKAEEQAQ…KMAAENEGKW (119 aa)) the composition is skewed to basic and acidic residues. Over residues 224–237 (QTESADYHVTTSQH) the composition is skewed to polar residues. Residues 239-254 (RAAEDENDAKVEGDRR) show a composition bias toward basic and acidic residues. Over residues 255 to 269 (SRTRGGKATKQKKGN) the composition is skewed to basic residues. The span at 270–283 (KLSESKADREEARA) shows a compositional bias: basic and acidic residues. The 170-residue stretch at 391–560 (HRAPVVTIMG…LLQAEVLELK (170 aa)) folds into the tr-type G domain. The interval 400 to 407 (GHVDHGKT) is G1. A GTP-binding site is contributed by 400 to 407 (GHVDHGKT). A G2 region spans residues 425 to 429 (GITQH). The G3 stretch occupies residues 446-449 (DTPG). GTP-binding positions include 446–450 (DTPGH) and 500–503 (NKID). A G4 region spans residues 500–503 (NKID). The segment at 536–538 (SAK) is G5.

The protein belongs to the TRAFAC class translation factor GTPase superfamily. Classic translation factor GTPase family. IF-2 subfamily.

It is found in the cytoplasm. In terms of biological role, one of the essential components for the initiation of protein synthesis. Protects formylmethionyl-tRNA from spontaneous hydrolysis and promotes its binding to the 30S ribosomal subunits. Also involved in the hydrolysis of GTP during the formation of the 70S ribosomal complex. This is Translation initiation factor IF-2 from Yersinia pseudotuberculosis serotype O:1b (strain IP 31758).